A 421-amino-acid polypeptide reads, in one-letter code: Serine--tRNA ligase (421 aa).

T225–E227 provides a ligand contact to L-serine. Residues R256–E258 and V272 contribute to the ATP site. Residue E279 coordinates L-serine. E345–S348 serves as a coordination point for ATP. Residue T380 coordinates L-serine.

Belongs to the class-II aminoacyl-tRNA synthetase family. Type-1 seryl-tRNA synthetase subfamily. In terms of assembly, homodimer. A single tRNA molecule binds across the dimer.

Its subcellular location is the cytoplasm. It catalyses the reaction tRNA(Ser) + L-serine + ATP = L-seryl-tRNA(Ser) + AMP + diphosphate + H(+). The catalysed reaction is tRNA(Sec) + L-serine + ATP = L-seryl-tRNA(Sec) + AMP + diphosphate + H(+). It functions in the pathway aminoacyl-tRNA biosynthesis; selenocysteinyl-tRNA(Sec) biosynthesis; L-seryl-tRNA(Sec) from L-serine and tRNA(Sec): step 1/1. In terms of biological role, catalyzes the attachment of serine to tRNA(Ser). Is also probably able to aminoacylate tRNA(Sec) with serine, to form the misacylated tRNA L-seryl-tRNA(Sec), which will be further converted into selenocysteinyl-tRNA(Sec). The sequence is that of Serine--tRNA ligase (serS) from Thermus thermophilus (strain ATCC BAA-163 / DSM 7039 / HB27).